The sequence spans 148 residues: Large ribosomal subunit protein uL15 (148 aa).

The interval 14–54 is disordered; that stretch reads HRKKRVGCGEGGGHGKTSGRGGKGQTARSGSSIRPGFEGGQ. Positions 21–37 are enriched in gly residues; the sequence is CGEGGGHGKTSGRGGKG.

This sequence belongs to the universal ribosomal protein uL15 family. As to quaternary structure, part of the 50S ribosomal subunit.

Its function is as follows. Binds to the 23S rRNA. In Opitutus terrae (strain DSM 11246 / JCM 15787 / PB90-1), this protein is Large ribosomal subunit protein uL15.